The sequence spans 335 residues: Eukaryotic translation initiation factor 3 subunit I (335 aa).

WD repeat units lie at residues 8-47, 50-91, 145-184, 189-228, and 286-325; these read GHERALTQIRYNKDGDIIFSTAKDQHICAWYAHNGERLGT, GHQG…KTWD, CAESKATVAGWSYMSKYIIAGHEDGSVSQYDSKTGELLFN, EPDLQVTDLQWSPDRTYFITASKDKTAKLVNARDLEVMKT, and GHFGPLNTVAVDPNGKGYASGGEDGYVRVHQFDKGYFDFT.

It belongs to the eIF-3 subunit I family. In terms of assembly, component of the eukaryotic translation initiation factor 3 (eIF-3) complex.

The protein localises to the cytoplasm. Its function is as follows. Component of the eukaryotic translation initiation factor 3 (eIF-3) complex, which is involved in protein synthesis of a specialized repertoire of mRNAs and, together with other initiation factors, stimulates binding of mRNA and methionyl-tRNAi to the 40S ribosome. The eIF-3 complex specifically targets and initiates translation of a subset of mRNAs involved in cell proliferation. This Sclerotinia sclerotiorum (strain ATCC 18683 / 1980 / Ss-1) (White mold) protein is Eukaryotic translation initiation factor 3 subunit I (tif34).